The sequence spans 158 residues: Transcriptional repressor NrdR (158 aa).

A zinc finger spans residues 3 to 34 (CPYCGYPDSKVIDSRPTDDNTSIRRRRECLKC). The 91-residue stretch at 49–139 (ILVIKKDNRR…VYRQFKDINT (91 aa)) folds into the ATP-cone domain.

It belongs to the NrdR family. Zn(2+) is required as a cofactor.

Its function is as follows. Negatively regulates transcription of bacterial ribonucleotide reductase nrd genes and operons by binding to NrdR-boxes. This chain is Transcriptional repressor NrdR, found in Thermoanaerobacter sp. (strain X514).